A 415-amino-acid chain; its full sequence is Heterogeneous nuclear ribonucleoprotein F (415 aa).

Met1 is modified (N-acetylmethionine). Met2 carries the post-translational modification N-acetylmethionine; in Heterogeneous nuclear ribonucleoprotein F, N-terminally processed. An RRM 1 domain is found at 13-85 (VKLRGLPWSC…ESMGHRYIEV (73 aa)). Lys72 participates in a covalent cross-link: Glycyl lysine isopeptide (Lys-Gly) (interchain with G-Cter in SUMO). Positions 81–86 (RYIEVF) are interaction with RNA. Lys87 is covalently cross-linked (Glycyl lysine isopeptide (Lys-Gly) (interchain with G-Cter in SUMO2)). 3 positions are modified to phosphoserine: Ser104, Ser107, and Ser161. The RRM 2 domain occupies 111-188 (GFVRLRGLPF…RYIEVFKSSQ (78 aa)). Lys167 participates in a covalent cross-link: Glycyl lysine isopeptide (Lys-Gly) (interchain with G-Cter in SUMO2). The segment at 179–184 (RYIEVF) is interaction with RNA. Residue Lys185 forms a Glycyl lysine isopeptide (Lys-Gly) (interchain with G-Cter in SUMO2) linkage. Ser187, Ser193, and Ser195 each carry phosphoserine. Lys200 carries the N6-acetyllysine; alternate modification. Lys200 is covalently cross-linked (Glycyl lysine isopeptide (Lys-Gly) (interchain with G-Cter in SUMO2); alternate). A Phosphothreonine modification is found at Thr215. An N6-acetyllysine; alternate modification is found at Lys224. Lys224 is covalently cross-linked (Glycyl lysine isopeptide (Lys-Gly) (interchain with G-Cter in SUMO2); alternate). Ser265 bears the Phosphoserine mark. Residues 289–366 (HCVHMRGLPY…IELFLNSTTG (78 aa)) form the RRM 3 domain. An interaction with RNA region spans residues 355-360 (RYIELF).

As to quaternary structure, identified in the spliceosome C complex. Interacts with AGO1, AGO2, TBP and TXNL4/DIM1. Post-translationally, sumoylated.

Its subcellular location is the nucleus. It is found in the nucleoplasm. Component of the heterogeneous nuclear ribonucleoprotein (hnRNP) complexes which provide the substrate for the processing events that pre-mRNAs undergo before becoming functional, translatable mRNAs in the cytoplasm. Plays a role in the regulation of alternative splicing events. Binds G-rich sequences in pre-mRNAs and keeps target RNA in an unfolded state. The polypeptide is Heterogeneous nuclear ribonucleoprotein F (HNRNPF) (Macaca fascicularis (Crab-eating macaque)).